The following is a 77-amino-acid chain: Putative defensin-like protein 118 (77 aa).

A signal peptide spans 1–25 (MSKSTILAIFMIVLVLGKVTKETQG). Disulfide bonds link Cys29–Cys75, Cys39–Cys58, Cys44–Cys69, and Cys48–Cys71.

Belongs to the DEFL family.

The protein resides in the secreted. The protein is Putative defensin-like protein 118 (LCR52) of Arabidopsis thaliana (Mouse-ear cress).